The chain runs to 393 residues: Phosphoglycerate kinase (393 aa).

Residues 21–23, arginine 36, 59–62, arginine 114, and arginine 147 each bind substrate; these read DLN and HLGR. Residues lysine 198, glutamate 320, and 346–349 contribute to the ATP site; that span reads GGDT.

It belongs to the phosphoglycerate kinase family. In terms of assembly, monomer.

Its subcellular location is the cytoplasm. The enzyme catalyses (2R)-3-phosphoglycerate + ATP = (2R)-3-phospho-glyceroyl phosphate + ADP. Its pathway is carbohydrate degradation; glycolysis; pyruvate from D-glyceraldehyde 3-phosphate: step 2/5. The sequence is that of Phosphoglycerate kinase from Methylobacillus flagellatus (strain ATCC 51484 / DSM 6875 / VKM B-1610 / KT).